Here is a 1091-residue protein sequence, read N- to C-terminus: MAVAGQLCLLYLSAGLLARLGTAFNLDTREDNVIRKSGDPGSLFGFSLAMHWQLQPEDKRLLLVGAPRAEALPLQRANRTGGLYSCDITSRGPCTRIEFDNDADPMSESKEDQWMGVTVQSQGPGGKVVTCAHRYEKRQHVNTKQESRDIFGRCYVLSQNLRIEDDMDGGDWSFCDGRLRGHEKFGSCQQGVAATFTKDFHYIVFGAPGTYNWKGIVRVEQKNNTFFDMNIFEDGPYEVGGETDHDESLVPVPANSYLGFSLDSGKGIVSKDDITFVSGAPRANHSGAVVLLKRDMKSAHLLPEYIFDGEGLASSFGYDVAVVDLNADGWQDIVIGAPQYFDRDGEVGGAVYVYINQQGKWSNVKPIRLNGTKDSMFGISVKNIGDINQDGYPDIAVGAPYDDLGKVFIYHGSPTGIITKPTQVLEGTSPYFGYSIAGNMDLDRNSYPDLAVGSLSDSVTIFRSRPVINILKTITVTPNRIDLRQKSMCGSPSGICLKVKACFEYTAKPSGYNPPISILGILEAEKERRKSGLSSRVQFRNQGSEPKYTQELTLNRQKQRACMEETLWLQENIRDKLRPIPITASVEIQEPSSRRRVNSLPEVLPILNSNEAKTVQTDVHFLKEGCGDDNVCNSNLKLEYKFGTREGNQDKFSYLPIQKGIPELVLKDQKDIALEITVTNSPSDPRNPRKDGDDAHEAKLIATFPDTLTYSAYRELRAFPEKQLSCVANQNGSQADCELGNPFKRNSSVTFYLILSTTEVTFDTTDLDINLKLETTSNQDNLAPITAKAKVVIELLLSVSGVAKPSQVYFGGTVVGEQAMKSEDEVGSLIEYEFRVINLGKPLKNLGTATLNIQWPKEISNGKWLLYLMKVESKGLEQIVCEPHNEINYLKLKESHNSRKKRELPEKQIDDSRKFSLFPERKYQTLNCSVNVRCVNIRCPLRGLDSKASLVLRSRLWNSTFLEEYSKLNYLDILLRASIDVTAAAQNIKLPHAGTQVRVTVFPSKTVAQYSGVAWWIILLAVLAGILMLALLVFLLWKCGFFKRSRYDDSIPRYHAVRIRKEEREIKDEKHMDNLEKKQWITKWNENESYS.

Positions 1 to 23 are cleaved as a signal peptide; the sequence is MAVAGQLCLLYLSAGLLARLGTA. The Extracellular segment spans residues 24 to 1011; the sequence is FNLDTREDNV…FPSKTVAQYS (988 aa). FG-GAP repeat units lie at residues 30-95, 101-166, 176-229, 244-300, 301-363, 364-419, and 420-479; these read EDNV…GPCT, NDAD…IEDD, DGRL…FFDM, DHDE…KSAH, LLPE…KWSN, VKPI…GIIT, and KPTQ…VTPN. A glycan (N-linked (GlcNAc...) asparagine) is linked at N78. 3 disulfide bridges follow: C86–C94, C131–C154, and C175–C188. N223 and N284 each carry an N-linked (GlcNAc...) asparagine glycan. Ca(2+) contacts are provided by D324, N326, D328, and D332. A glycan (N-linked (GlcNAc...) asparagine) is linked at N370. D386, N388, D390, Y392, D394, D441, D443, N445, Y447, and D449 together coordinate Ca(2+). Intrachain disulfides connect C489/C496, C502/C562, C626/C632, and C726/C737. N-linked (GlcNAc...) asparagine glycans are attached at residues N731, N746, and N927. 2 disulfides stabilise this stretch: C881/C928 and C934/C939. An N-linked (GlcNAc...) asparagine glycan is attached at N958. A helical transmembrane segment spans residues 1012-1037; that stretch reads GVAWWIILLAVLAGILMLALLVFLLW. Residues 1038–1091 lie on the Cytoplasmic side of the membrane; sequence KCGFFKRSRYDDSIPRYHAVRIRKEEREIKDEKHMDNLEKKQWITKWNENESYS. The S-palmitoyl cysteine; by DHHC3 moiety is linked to residue C1039. The GFFKR motif signature appears at 1040–1044; the sequence is GFFKR. R1064 carries the post-translational modification Phosphoserine.

Belongs to the integrin alpha chain family. In terms of assembly, heterodimer of an alpha and a beta subunit. The alpha subunit is composed of a heavy and a light chain linked by a disulfide bond. Alpha-6 associates with either beta-1 (ITGB1) or beta-4 (ITGB4) to form ITGA6:ITGB1 and ITGA6:ITGB4, respectively. ITGA6:ITGB1 is found in a complex with CD9; interaction takes place in oocytes and is involved in sperm-egg fusion. ITGA6:ITGB4 is found in a ternary complex with NRG1 and ERBB3. ITGA6:ITGB4 is found in a ternary complex with IGF1 and IGF1R. ITGA6:ITGB4 interacts with IGF2. Interacts with ADAM9. Interacts with RAB21. Interacts with MDK. ITGA6:ITGB1 interacts with MDK; this interaction mediates MDK-induced neurite outgrowth. Interacts with CD82; this interaction down-regulates ITGA6-mediated cell adhesion. Isoforms containing segment A, but not segment B, are the major targets for PMA-induced phosphorylation. Phosphorylation occurs on 'Ser-1064' of isoform alpha-6X1A. Phosphorylation is not required for the induction of integrin alpha-6A/beta-1 high affinity but may reduce the affinity for ligand. In terms of processing, undergoes PLAU-mediated cleavage at residues Arg-595-596-Arg in a time-dependent manner to produce processed integrin alpha-6 (alpha6p). Post-translationally, palmitoylation by DHHC3 enhances stability and cell surface expression. Expressed at low levels in normal skin tissue with elevated levels in skin tumors.

It localises to the cell membrane. Functionally, integrin alpha-6/beta-1 (ITGA6:ITGB1) is a receptor for laminin on platelets. Integrin alpha-6/beta-1 (ITGA6:ITGB1) is present in oocytes and is involved in sperm-egg fusion. Integrin alpha-6/beta-4 (ITGA6:ITGB4) is a receptor for laminin in epithelial cells and it plays a critical structural role in the hemidesmosome. ITGA6:ITGB4 binds to NRG1 (via EGF domain) and this binding is essential for NRG1-ERBB signaling. ITGA6:ITGB4 binds to IGF1 and this binding is essential for IGF1 signaling. ITGA6:ITGB4 binds to IGF2 and this binding is essential for IGF2 signaling. This is Integrin alpha-6 (Itga6) from Mus musculus (Mouse).